The primary structure comprises 553 residues: CTP synthase (553 aa).

An amidoligase domain region spans residues Met1–Leu278. CTP is bound at residue Ser25. Ser25 contributes to the UTP binding site. ATP is bound by residues Ser26–Leu31 and Asp83. Positions 83 and 152 each coordinate Mg(2+). CTP contacts are provided by residues Asp159–Glu161, Lys199–Gln204, and Lys235. UTP is bound by residues Lys199 to Gln204 and Lys235. Positions Asn303–Ala552 constitute a Glutamine amidotransferase type-1 domain. Gly366 contacts L-glutamine. Residue Cys393 is the Nucleophile; for glutamine hydrolysis of the active site. L-glutamine-binding positions include Leu394–Gln397, Glu417, and Arg478. Residues His525 and Glu527 contribute to the active site.

The protein belongs to the CTP synthase family. In terms of assembly, homotetramer.

The catalysed reaction is UTP + L-glutamine + ATP + H2O = CTP + L-glutamate + ADP + phosphate + 2 H(+). It catalyses the reaction L-glutamine + H2O = L-glutamate + NH4(+). It carries out the reaction UTP + NH4(+) + ATP = CTP + ADP + phosphate + 2 H(+). It participates in pyrimidine metabolism; CTP biosynthesis via de novo pathway; CTP from UDP: step 2/2. Allosterically activated by GTP, when glutamine is the substrate; GTP has no effect on the reaction when ammonia is the substrate. The allosteric effector GTP functions by stabilizing the protein conformation that binds the tetrahedral intermediate(s) formed during glutamine hydrolysis. Inhibited by the product CTP, via allosteric rather than competitive inhibition. Functionally, catalyzes the ATP-dependent amination of UTP to CTP with either L-glutamine or ammonia as the source of nitrogen. Regulates intracellular CTP levels through interactions with the four ribonucleotide triphosphates. The protein is CTP synthase of Bifidobacterium longum (strain NCC 2705).